Here is a 91-residue protein sequence, read N- to C-terminus: Acylphosphatase (91 aa).

One can recognise an Acylphosphatase-like domain in the interval 3–91 (TVTMKVTGLV…EKFTRFSVVY (89 aa)). Catalysis depends on residues arginine 18 and asparagine 36.

This sequence belongs to the acylphosphatase family.

It carries out the reaction an acyl phosphate + H2O = a carboxylate + phosphate + H(+). In Lactobacillus gasseri (strain ATCC 33323 / DSM 20243 / BCRC 14619 / CIP 102991 / JCM 1131 / KCTC 3163 / NCIMB 11718 / NCTC 13722 / AM63), this protein is Acylphosphatase (acyP).